An 86-amino-acid polypeptide reads, in one-letter code: Omega-theraphotoxin-Hhn1d (86 aa).

The signal sequence occupies residues 1–21; sequence MKSIVFVALFGLALLAVVCSA. Positions 22 to 50 are excised as a propeptide; the sequence is SEDAHKELLKEVVRAMVVDKTDAVQAEER. 3 disulfides stabilise this stretch: C52–C66, C59–C71, and C65–C78.

The protein belongs to the neurotoxin 10 (Hwtx-1) family. 17 (Hntx-9) subfamily. In terms of tissue distribution, expressed by the venom gland.

It localises to the secreted. Ion channel inhibitor. The sequence is that of Omega-theraphotoxin-Hhn1d from Cyriopagopus hainanus (Chinese bird spider).